The chain runs to 634 residues: Dachshund homolog 2 (634 aa).

The DACHbox-N stretch occupies residues 76–162; the sequence is RMVDMHGVKV…LITRKDFETL (87 aa). Disordered regions lie at residues 171–194, 244–286, and 378–416; these read RKRQ…KRSL, LQGN…SGPQ, and IPES…MDHH. The span at 244–269 shows a compositional bias: polar residues; it reads LQGNGSQNGTESEPDDLNSTTGGSES. Over residues 396–412 the composition is skewed to low complexity; it reads SQTSSHPSSSVSSSPSQ. Positions 488–568 are DACHbox-C; it reads SSVETLLTNI…KAKRKLQEAL (81 aa). Residues 494 to 588 are a coiled coil; it reads LTNIQGLLKV…EQALKQATSG (95 aa).

This sequence belongs to the DACH/dachshund family. Interacts with SIX6. Interacts with EYA2. Expressed in embryo, and at lower levels in the newborn.

The protein resides in the nucleus. Its function is as follows. Transcription factor that is involved in regulation of organogenesis. Seems to be a regulator for SIX1 and SIX6. Seems to act as a corepressor of SIX6 in regulating proliferation by directly repressing cyclin-dependent kinase inhibitors, including the p27Kip1 promoter. Is recruited with SIX6 to the p27Kip1 promoter in embryonal retina. SIX6 corepression also seems to involve NCOR1, TBL1, HDAC1 and HDAC3. May be involved together with PAX3, SIX1, and EYA2 in regulation of myogenesis. In the developing somite, expression of DACH2 and PAX3 is regulated by the overlying ectoderm, and DACH2 and PAX3 positively regulate each other's expression. Probably binds to DNA via its DACHbox-N domain. This is Dachshund homolog 2 (Dach2) from Mus musculus (Mouse).